Here is a 134-residue protein sequence, read N- to C-terminus: ATP synthase epsilon chain (134 aa).

It belongs to the ATPase epsilon chain family. As to quaternary structure, F-type ATPases have 2 components, CF(1) - the catalytic core - and CF(0) - the membrane proton channel. CF(1) has five subunits: alpha(3), beta(3), gamma(1), delta(1), epsilon(1). CF(0) has three main subunits: a, b and c.

It is found in the cell inner membrane. Its function is as follows. Produces ATP from ADP in the presence of a proton gradient across the membrane. In Rhizobium meliloti (strain 1021) (Ensifer meliloti), this protein is ATP synthase epsilon chain.